Reading from the N-terminus, the 368-residue chain is Histidinol-phosphate aminotransferase (368 aa).

Lys224 carries the N6-(pyridoxal phosphate)lysine modification.

This sequence belongs to the class-II pyridoxal-phosphate-dependent aminotransferase family. Histidinol-phosphate aminotransferase subfamily. In terms of assembly, homodimer. Pyridoxal 5'-phosphate is required as a cofactor.

The catalysed reaction is L-histidinol phosphate + 2-oxoglutarate = 3-(imidazol-4-yl)-2-oxopropyl phosphate + L-glutamate. The protein operates within amino-acid biosynthesis; L-histidine biosynthesis; L-histidine from 5-phospho-alpha-D-ribose 1-diphosphate: step 7/9. The sequence is that of Histidinol-phosphate aminotransferase from Agrobacterium fabrum (strain C58 / ATCC 33970) (Agrobacterium tumefaciens (strain C58)).